The primary structure comprises 60 residues: Large ribosomal subunit protein bL32 (60 aa).

The disordered stretch occupies residues M1 to A21.

The protein belongs to the bacterial ribosomal protein bL32 family.

In Chlamydia felis (strain Fe/C-56) (Chlamydophila felis), this protein is Large ribosomal subunit protein bL32.